Here is a 343-residue protein sequence, read N- to C-terminus: L-threonine 3-dehydrogenase (343 aa).

Residue cysteine 38 participates in Zn(2+) binding. Residues threonine 40 and histidine 43 each act as charge relay system in the active site. The Zn(2+) site is built by histidine 63, glutamate 64, cysteine 93, cysteine 96, cysteine 99, and cysteine 107. NAD(+)-binding positions include isoleucine 176, aspartate 196, arginine 201, 261–263 (LGI), and 286–288 (IAG).

This sequence belongs to the zinc-containing alcohol dehydrogenase family. In terms of assembly, homotetramer. Zn(2+) is required as a cofactor.

The protein resides in the cytoplasm. It catalyses the reaction L-threonine + NAD(+) = (2S)-2-amino-3-oxobutanoate + NADH + H(+). Its pathway is amino-acid degradation; L-threonine degradation via oxydo-reductase pathway; glycine from L-threonine: step 1/2. Its function is as follows. Catalyzes the NAD(+)-dependent oxidation of L-threonine to 2-amino-3-ketobutyrate. This Thermus thermophilus (strain ATCC 27634 / DSM 579 / HB8) protein is L-threonine 3-dehydrogenase.